A 660-amino-acid chain; its full sequence is DNA mismatch repair protein MutL (660 aa).

Belongs to the DNA mismatch repair MutL/HexB family.

In terms of biological role, this protein is involved in the repair of mismatches in DNA. It is required for dam-dependent methyl-directed DNA mismatch repair. May act as a 'molecular matchmaker', a protein that promotes the formation of a stable complex between two or more DNA-binding proteins in an ATP-dependent manner without itself being part of a final effector complex. The polypeptide is DNA mismatch repair protein MutL (Streptococcus pyogenes serotype M1).